Consider the following 764-residue polypeptide: Polyribonucleotide nucleotidyltransferase (764 aa).

Positions 555 and 561 each coordinate Mg(2+). The KH domain occupies 621-680 (PHITSINIPQNKIGEVIGPKGKTINQITEETGANITIEDDGTVFISAVGGESAREAEEKI). Residues 692-761 (GDRFLGTVVK…NRGKISLVLV (70 aa)) enclose the S1 motif domain.

This sequence belongs to the polyribonucleotide nucleotidyltransferase family. Requires Mg(2+) as cofactor.

Its subcellular location is the cytoplasm. It carries out the reaction RNA(n+1) + phosphate = RNA(n) + a ribonucleoside 5'-diphosphate. Its function is as follows. Involved in mRNA degradation. Catalyzes the phosphorolysis of single-stranded polyribonucleotides processively in the 3'- to 5'-direction. This Corynebacterium jeikeium (strain K411) protein is Polyribonucleotide nucleotidyltransferase.